Reading from the N-terminus, the 127-residue chain is Large ribosomal subunit protein bL17 (127 aa).

It belongs to the bacterial ribosomal protein bL17 family. In terms of assembly, part of the 50S ribosomal subunit. Contacts protein L32.

The sequence is that of Large ribosomal subunit protein bL17 from Pediococcus pentosaceus (strain ATCC 25745 / CCUG 21536 / LMG 10740 / 183-1w).